A 326-amino-acid chain; its full sequence is Protein C10 (326 aa).

Belongs to the poxviridae C4/C10 protein family.

This Homo sapiens (Human) protein is Protein C10.